Reading from the N-terminus, the 227-residue chain is NAD(P)H-hydrate epimerase (227 aa).

One can recognise a YjeF N-terminal domain in the interval 10–227 (MRALETAAFN…GKIMVQYIGL (218 aa)). 62-66 (NNGGD) is a (6S)-NADPHX binding site. K(+) is bound by residues Asn63 and Asp142. Residues 146-152 (GIGLNRP) and Asp176 contribute to the (6S)-NADPHX site. Ser179 lines the K(+) pocket.

The protein belongs to the NnrE/AIBP family. K(+) serves as cofactor.

It catalyses the reaction (6R)-NADHX = (6S)-NADHX. The enzyme catalyses (6R)-NADPHX = (6S)-NADPHX. In terms of biological role, catalyzes the epimerization of the S- and R-forms of NAD(P)HX, a damaged form of NAD(P)H that is a result of enzymatic or heat-dependent hydration. This is a prerequisite for the S-specific NAD(P)H-hydrate dehydratase to allow the repair of both epimers of NAD(P)HX. This chain is NAD(P)H-hydrate epimerase, found in Roseobacter litoralis (strain ATCC 49566 / DSM 6996 / JCM 21268 / NBRC 15278 / OCh 149).